A 352-amino-acid chain; its full sequence is Beta-1,4-xylanase (352 aa).

The signal sequence occupies residues 1–23 (MINQRFSILVLLLILLTFSLGFL). The GH10 domain maps to 29 to 352 (GMEIPSLKEV…KKAFWEIVKF (324 aa)). E155 serves as the catalytic Proton donor. The active-site Nucleophile is the E262.

It belongs to the glycosyl hydrolase 10 (cellulase F) family.

The protein resides in the secreted. It carries out the reaction Endohydrolysis of (1-&gt;4)-beta-D-xylosidic linkages in xylans.. Its pathway is glycan degradation; xylan degradation. This Dictyoglomus thermophilum protein is Beta-1,4-xylanase (xynA).